A 396-amino-acid chain; its full sequence is Phosphoglycerate kinase (396 aa).

Residues 21 to 23 (DFN), R36, 59 to 62 (HLGK), R119, and R156 each bind substrate. ATP contacts are provided by residues K206, E325, and 352–355 (GGDS).

Belongs to the phosphoglycerate kinase family. In terms of assembly, monomer.

The protein resides in the cytoplasm. The catalysed reaction is (2R)-3-phosphoglycerate + ATP = (2R)-3-phospho-glyceroyl phosphate + ADP. The protein operates within carbohydrate degradation; glycolysis; pyruvate from D-glyceraldehyde 3-phosphate: step 2/5. The sequence is that of Phosphoglycerate kinase from Staphylococcus saprophyticus subsp. saprophyticus (strain ATCC 15305 / DSM 20229 / NCIMB 8711 / NCTC 7292 / S-41).